The sequence spans 318 residues: Probable ABC transporter permease protein MG189 (318 aa).

A run of 6 helical transmembrane segments spans residues 42–62 (VLGF…VVSF), 98–118 (AIVV…FFTI), 134–154 (LVWF…LIGQ), 169–189 (PLIV…GFMY), 230–250 (VGIL…LLLG), and 282–302 (LKMS…FLFH). In terms of domain architecture, ABC transmembrane type-1 spans 99–301 (IVVNTLVTVL…LPMFIIYFLF (203 aa)).

This sequence belongs to the binding-protein-dependent transport system permease family. MalFG subfamily.

It localises to the cell membrane. Functionally, probably part of a binding-protein-dependent transport system. Probably responsible for the translocation of the substrate across the membrane. This is Probable ABC transporter permease protein MG189 from Mycoplasma genitalium (strain ATCC 33530 / DSM 19775 / NCTC 10195 / G37) (Mycoplasmoides genitalium).